The following is a 74-amino-acid chain: Exodeoxyribonuclease 7 small subunit (74 aa).

Belongs to the XseB family. Heterooligomer composed of large and small subunits.

It localises to the cytoplasm. The enzyme catalyses Exonucleolytic cleavage in either 5'- to 3'- or 3'- to 5'-direction to yield nucleoside 5'-phosphates.. Its function is as follows. Bidirectionally degrades single-stranded DNA into large acid-insoluble oligonucleotides, which are then degraded further into small acid-soluble oligonucleotides. In Neisseria gonorrhoeae (strain ATCC 700825 / FA 1090), this protein is Exodeoxyribonuclease 7 small subunit.